We begin with the raw amino-acid sequence, 284 residues long: 4-diphosphocytidyl-2-C-methyl-D-erythritol kinase (284 aa).

Residue Lys-14 is part of the active site. Residue 97–107 coordinates ATP; sequence PMGGGLGGGSS. The active site involves Asp-139.

The protein belongs to the GHMP kinase family. IspE subfamily.

The enzyme catalyses 4-CDP-2-C-methyl-D-erythritol + ATP = 4-CDP-2-C-methyl-D-erythritol 2-phosphate + ADP + H(+). Its pathway is isoprenoid biosynthesis; isopentenyl diphosphate biosynthesis via DXP pathway; isopentenyl diphosphate from 1-deoxy-D-xylulose 5-phosphate: step 3/6. Catalyzes the phosphorylation of the position 2 hydroxy group of 4-diphosphocytidyl-2C-methyl-D-erythritol. The chain is 4-diphosphocytidyl-2-C-methyl-D-erythritol kinase from Psychromonas ingrahamii (strain DSM 17664 / CCUG 51855 / 37).